The chain runs to 358 residues: Trace amine-associated receptor 7d (358 aa).

Over 1–47 (MATGDDSFPWDQDSILSRDLFSATSTELCYENLNRSCVRSPYSPGPR) the chain is Extracellular. N-linked (GlcNAc...) asparagine glycosylation is present at Asn34. Disulfide bonds link Cys37-Cys201 and Cys120-Cys205. Residues 48–68 (LILYAVFGFGAVLAVCGNLLV) form a helical membrane-spanning segment. Residues 69 to 83 (MTSILHFRQLHSPAN) are Cytoplasmic-facing. The helical transmembrane segment at 84–104 (FLVASLACADFLVGVMVMPFS) threads the bilayer. The Extracellular segment spans residues 105–121 (MVRSVEGCWYFGESYCK). A helical transmembrane segment spans residues 122 to 143 (FHSCFEGSFCYSSLFHLCFISV). Over 144–166 (DRYIAVSDPLTYPTRFTASVSGK) the chain is Cytoplasmic. A helical membrane pass occupies residues 167–187 (CITFSWLLSIIYSFSLLYTGA). Residues 188–212 (NDAGLEDLVSALTCVGGCQIAVNQT) lie on the Extracellular side of the membrane. Asn210 carries N-linked (GlcNAc...) asparagine glycosylation. The chain crosses the membrane as a helical span at residues 213–233 (WVFINFLLFLIPTLVMITVYS). The Cytoplasmic portion of the chain corresponds to 234–274 (KIFLIAKQQAQNIEKMSKQTARASESYKDRVTKRERKAAKT). A helical membrane pass occupies residues 275–295 (LGIAVAAFLLSWLPYFIDSII). The Extracellular segment spans residues 296-309 (DAFLGFITPTYVYE). Residues 310 to 333 (ILVWIVYYNSAMNPLIYAFFYSWF) form a helical membrane-spanning segment. Residues 334–358 (RKAIKLIVSGKILRENSSTTNLFPE) lie on the Cytoplasmic side of the membrane.

Belongs to the G-protein coupled receptor 1 family. In terms of tissue distribution, specifically expressed in neurons of the olfactory epithelium.

Its subcellular location is the cell membrane. Olfactory receptor specific for trace amines, such as beta-phenylethylamine (beta-PEA). Trace amine compounds are enriched in animal body fluids and act on trace amine-associated receptors (TAARs) to elicit both intraspecific and interspecific innate behaviors. Ligand-binding causes a conformation change that triggers signaling via G(s)-class of G alpha proteins (GNAL or GNAS). This is Trace amine-associated receptor 7d from Mus musculus (Mouse).